Here is a 196-residue protein sequence, read N- to C-terminus: Calmodulin-like protein 4 (196 aa).

Residues 1-43 are disordered; sequence MAAEHLLPGPPPSLADFRLEAGGKGTERGSGSSKPTGSSRGPR. A compositionally biased stretch (basic and acidic residues) spans 17–27; sequence FRLEAGGKGTE. Over residues 29 to 39 the composition is skewed to polar residues; the sequence is GSGSSKPTGSS. EF-hand domains follow at residues 51–86, 87–122, 124–159, and 160–195; these read DQINEYKECFSLYDKQQRGKIKATDLMVAMRCLGAS, PTPGEVQRHLQTHGIDGNGELDFSTFLTIMHMQIKQ, DPKKEILLAMLMVDKEKKGYVMASDLRSKLTSLGEK, and LTHKEVDDLFREADIEPNGKVKYDEFIHKITLPGRD.

The protein belongs to the calmodulin family. Interacts with MYO7B; the interaction mediates the association of CALML4 with the IMAC/intermicrovillar adhesion complex. Interacts with MYO7A. In terms of tissue distribution, expressed in the intestinal tract. Dominant transcript in the intestinal tract.

It localises to the cell projection. It is found in the microvillus. As part of the intermicrovillar adhesion complex/IMAC plays a role in epithelial brush border differentiation, controlling microvilli organization and length. Acts as a light chain for MYO7B and is required for efficient targeting of the IMAC to the tips of border brush microvilli. The sequence is that of Calmodulin-like protein 4 from Homo sapiens (Human).